The chain runs to 98 residues: Large ribosomal subunit protein eL14 (98 aa).

The protein belongs to the eukaryotic ribosomal protein eL14 family.

This is Large ribosomal subunit protein eL14 from Thermofilum pendens (strain DSM 2475 / Hrk 5).